Reading from the N-terminus, the 444-residue chain is MKTVQLDQLKQQFPLIQTLQDYQETFWFNPHRYPLNEALAKVGLTEQDVKEAEARLARFAPYLAKVFPETQAQYGKIESALVKIADMQQALSLQKHKTLTGKLWLKKDSHLPISGSIKARGGIYEVLAHAEKLAIEAGLLKLEDDYSKLDQDSFRTFFSKYQIAVGSTGNLGLSIGIMSAKLGFRVSVHMSADARQWKKDKLRSLGVNVVEYASDYGVAVEEGRKAAEQDPFCFFIDDENSTTLFLGYAVAGLRLKQQFEQKQIKVDADHPLFVYLPCGVGGGPGGVSFGLKLAFGEHVHCIFAEPTHSPCMLLGVYTGLHDQISVNDIGLDNITAADGLAVGRASGFVGRAMQQLIDGYYTIHDECLYELIALLNQTENIQVEPSAAAGMMGPYYVQTTPDYLALHQLSAEKLQHATHVLWATGGGMVPPDEMQKYLTHSQSN.

Lysine 118 carries the N6-(pyridoxal phosphate)lysine modification.

It belongs to the serine/threonine dehydratase family. DsdA subfamily. Requires pyridoxal 5'-phosphate as cofactor.

The enzyme catalyses D-serine = pyruvate + NH4(+). In Acinetobacter baumannii (strain AB0057), this protein is Probable D-serine dehydratase.